A 214-amino-acid polypeptide reads, in one-letter code: N-(5'-phosphoribosyl)anthranilate isomerase (214 aa).

Belongs to the TrpF family.

It carries out the reaction N-(5-phospho-beta-D-ribosyl)anthranilate = 1-(2-carboxyphenylamino)-1-deoxy-D-ribulose 5-phosphate. Its pathway is amino-acid biosynthesis; L-tryptophan biosynthesis; L-tryptophan from chorismate: step 3/5. The chain is N-(5'-phosphoribosyl)anthranilate isomerase from Haloarcula marismortui (strain ATCC 43049 / DSM 3752 / JCM 8966 / VKM B-1809) (Halobacterium marismortui).